The primary structure comprises 129 residues: Large ribosomal subunit protein bL17 (129 aa).

Belongs to the bacterial ribosomal protein bL17 family. As to quaternary structure, part of the 50S ribosomal subunit. Contacts protein L32.

The polypeptide is Large ribosomal subunit protein bL17 (Stutzerimonas stutzeri (strain A1501) (Pseudomonas stutzeri)).